The following is a 195-amino-acid chain: Putative lysine exporter (195 aa).

Helical transmembrane passes span 4 to 24 (LLSA…WLHF), 30 to 50 (LYVL…NGIS), 61 to 81 (LMMG…SAFF), 86 to 106 (ITQG…SVVL), 117 to 137 (IAFF…PLFM), and 170 to 190 (PIAI…LVFF).

Belongs to the LysO family.

It localises to the cell inner membrane. Mediates export of lysine. The polypeptide is Putative lysine exporter (Haemophilus influenzae (strain ATCC 51907 / DSM 11121 / KW20 / Rd)).